Here is a 549-residue protein sequence, read N- to C-terminus: CDK5RAP3 protein homolog (549 aa).

Short sequence motifs (shuffled ATG8-binding motif) lie at residues I274 to D277, I285 to D288, and I333 to D336.

This sequence belongs to the CDK5RAP3 family. Substrate adapter component of the UFM1 ribosome E3 ligase (UREL) complex. Interacts with ATG8 family proteins.

In terms of biological role, substrate adapter of E3 ligase complexes mediating ufmylation, the covalent attachment of the ubiquitin-like modifier UFM1 to substrate proteins, and which is involved in various processes, such as ribosome recycling and reticulophagy (also called ER-phagy). The polypeptide is CDK5RAP3 protein homolog (Arabidopsis thaliana (Mouse-ear cress)).